The chain runs to 394 residues: Phosphoglycerate kinase (394 aa).

Substrate is bound by residues 21–23 (DFN), R36, 59–62 (HLGR), R118, and R151. At S183 the chain carries Phosphoserine. K201 and G292 together coordinate ATP. T299 is modified (phosphothreonine). ATP-binding positions include E323 and 350 to 353 (GGDS).

Belongs to the phosphoglycerate kinase family. Monomer.

The protein resides in the cytoplasm. The enzyme catalyses (2R)-3-phosphoglycerate + ATP = (2R)-3-phospho-glyceroyl phosphate + ADP. It functions in the pathway carbohydrate degradation; glycolysis; pyruvate from D-glyceraldehyde 3-phosphate: step 2/5. The chain is Phosphoglycerate kinase (pgk) from Priestia megaterium (strain DSM 319 / IMG 1521) (Bacillus megaterium).